Reading from the N-terminus, the 325-residue chain is uncharacterized protein (325 aa).

Positions 108–141 (PHRTQGISSTSSKSSKGGKKTPVRSTPKEIKKAT) are disordered.

This is an uncharacterized protein from Homo sapiens (Human).